A 226-amino-acid polypeptide reads, in one-letter code: UPF0758 protein SPD_0975 (226 aa).

One can recognise an MPN domain in the interval 103–225 (SILSSQKLAK…YFSYREKTDL (123 aa)). Positions 174, 176, and 187 each coordinate Zn(2+). Residues 174–187 (HNHPSGAVAPSQND) carry the JAMM motif motif.

Belongs to the UPF0758 family.

The chain is UPF0758 protein SPD_0975 from Streptococcus pneumoniae serotype 2 (strain D39 / NCTC 7466).